A 423-amino-acid polypeptide reads, in one-letter code: UDP-N-acetylglucosamine 1-carboxyvinyltransferase 2 (423 aa).

Residue 23–24 participates in phosphoenolpyruvate binding; sequence KN. Arg96 contacts UDP-N-acetyl-alpha-D-glucosamine. The Proton donor role is filled by Cys120. Position 120 is a 2-(S-cysteinyl)pyruvic acid O-phosphothioketal (Cys120). Residues 125–129, Asp309, and Val331 contribute to the UDP-N-acetyl-alpha-D-glucosamine site; that span reads RPIDL.

The protein belongs to the EPSP synthase family. MurA subfamily.

The protein resides in the cytoplasm. The catalysed reaction is phosphoenolpyruvate + UDP-N-acetyl-alpha-D-glucosamine = UDP-N-acetyl-3-O-(1-carboxyvinyl)-alpha-D-glucosamine + phosphate. It functions in the pathway cell wall biogenesis; peptidoglycan biosynthesis. Cell wall formation. Adds enolpyruvyl to UDP-N-acetylglucosamine. In Streptococcus agalactiae serotype Ia (strain ATCC 27591 / A909 / CDC SS700), this protein is UDP-N-acetylglucosamine 1-carboxyvinyltransferase 2.